A 378-amino-acid chain; its full sequence is Spermatogenic leucine zipper protein 1 (378 aa).

Positions 1-31 (MSDTDNSAEMPARCPSPNPAPGAKQEPPNSG) are disordered. S106 is subject to Phosphoserine. An interaction with PPP1CC isoform gamma-2 region spans residues 116–122 (KNKIRFK). The helix-loop-helix motif stretch occupies residues 116–127 (KNKIRFKDDLFI). Positions 128 to 193 (HFDPEREQNT…HLRGEYRKLR (66 aa)) are basic motif. Residues 182-233 (SLHLRGEYRKLRNNMEQLLQEADHWSKQHNELSELMRSYQECQNETQETTDK) are a coiled coil. S207 bears the Phosphoserine mark. The segment at 252-273 (LEEQVKKLSHDTHALHLIAALL) is leucine-zipper.

In terms of assembly, interacts with PPP1CC isoform gamma-2. This interaction can prevent SPZ1 binding to the E-box and inhibits PPP1CC activity. Phosphorylated by MAPK1/ERK2 and MAPK3/ERK1. As to expression, expressed specifically in the testis and epidydimis. In the testis expressed in both germ cells and somatic cells (Sertoli and Leydig cells). Expressed in several tumor cell lines.

It is found in the cytoplasm. The protein resides in the nucleus. In terms of biological role, transcription factor that binds to the DNA sequence 5'-CANNTG-3'(E box) and the G-box motif. Directly binds to a guanine-rich region of the PCNA promoter and up-regulates its expression which in turn induces cell transformation and tumor formation. May play an important role in the regulation of cell proliferation and differentiation during spermatogenesis. This chain is Spermatogenic leucine zipper protein 1 (Spz1), found in Mus musculus (Mouse).